Here is a 475-residue protein sequence, read N- to C-terminus: Ras-GEF domain-containing family member 1B-B (475 aa).

Residues 1 to 19 (MPQTTPYSSKFNPSAYSSS) show a composition bias toward polar residues. A disordered region spans residues 1 to 25 (MPQTTPYSSKFNPSAYSSSHSHRQP). Positions 36–166 (RDNKLVSGSL…LIQRLLRKLT (131 aa)) constitute an N-terminal Ras-GEF domain. One can recognise a Ras-GEF domain in the interval 209–456 (DPFIFAQQLT…QLASYESEGP (248 aa)). The segment at 452-475 (ESEGPENNLERDTRRSLRSSLSRM) is disordered.

Its function is as follows. Guanine nucleotide exchange factor (GEF) for Ras family proteins. This is Ras-GEF domain-containing family member 1B-B from Danio rerio (Zebrafish).